Consider the following 425-residue polypeptide: F-box/LRR-repeat protein At3g59250 (425 aa).

One can recognise an F-box domain in the interval 6–54 (KDKISNLPEALICHILSFLPIEDSALTSVLSKRWRYLFAFRPNLVFDDS). LRR repeat units lie at residues 86–113 (DLQV…RIES), 138–163 (MLGK…VLNN), 185–210 (CTES…KYSD), 264–293 (CLSA…TIKT), and 294–319 (NQSV…VFEG).

The protein is F-box/LRR-repeat protein At3g59250 of Arabidopsis thaliana (Mouse-ear cress).